Consider the following 238-residue polypeptide: Thrombin-like enzyme AhV_TL-I (238 aa).

The region spanning isoleucine 1 to alanine 229 is the Peptidase S1 domain. 6 disulfide bridges follow: cysteine 7/cysteine 141, cysteine 28/cysteine 44, cysteine 76/cysteine 236, cysteine 120/cysteine 190, cysteine 152/cysteine 169, and cysteine 180/cysteine 205. Catalysis depends on histidine 43, which acts as the Charge relay system. The N-linked (GlcNAc...) asparagine glycan is linked to asparagine 81. Catalysis depends on aspartate 88, which acts as the Charge relay system. Serine 184 functions as the Charge relay system in the catalytic mechanism.

The protein belongs to the peptidase S1 family. Snake venom subfamily. As to quaternary structure, monomer. In terms of processing, N-glycosylated at Asn-81 by a disaccharide composed of two N-acetylglucosamine (NAG). The presence of this N-glycan deforms the enzyme and Removing the carbohydrate moiety increases the esterase activity, but induces a complete loss of contractile response on mouse thoracic aorta. Expressed by the venom gland.

It is found in the secreted. Its activity is regulated as follows. Inhibited by PMSF, L-cysteine and partially by SBTI and leupeptin. Thrombin-like enzyme that shows fibrinogenolytic activity against both the Aalpha (FGA) and Bbeta (FGB) chains of bovine fibrinogen. This enzyme has poor esterolytic activity upon BAEE substrate. It induces mouse thoracic aortic ring contraction with EC(50)=147 nmol/L. It shows vasoconstrictor effects that are independent of the enzymatic activity, but related to the release of calcium ions form the calcium store, potentially through the activation of ryanodine receptors. The chain is Thrombin-like enzyme AhV_TL-I from Gloydius halys (Chinese water mocassin).